The primary structure comprises 1606 residues: Pentafunctional AROM polypeptide (1606 aa).

Positions 1-390 are 3-dehydroquinate synthase; sequence MANADVLKVS…YEPKATVVPD (390 aa). Residues 45–47, 85–88, 116–118, and D121 contribute to the NAD(+) site; these read DTN, ETSK, and GGV. R132 contributes to the 7-phospho-2-dehydro-3-deoxy-D-arabino-heptonate binding site. 141 to 142 contacts NAD(+); that stretch reads TT. The 7-phospho-2-dehydro-3-deoxy-D-arabino-heptonate site is built by D148 and K154. K163 contacts NAD(+). Position 164 (N164) interacts with 7-phospho-2-dehydro-3-deoxy-D-arabino-heptonate. Residues 181-184 and N192 contribute to the NAD(+) site; that span reads FLET. E196 lines the Zn(2+) pocket. 7-phospho-2-dehydro-3-deoxy-D-arabino-heptonate-binding positions include 196–199 and K256; that span reads EVVK. The Proton acceptor; for 3-dehydroquinate synthase activity role is filled by E266. Residues 270 to 274 and H277 contribute to the 7-phospho-2-dehydro-3-deoxy-D-arabino-heptonate site; that span reads RNLVN. A Zn(2+)-binding site is contributed by H277. H281 functions as the Proton acceptor; for 3-dehydroquinate synthase activity in the catalytic mechanism. Residues H293 and K362 each coordinate 7-phospho-2-dehydro-3-deoxy-D-arabino-heptonate. Zn(2+) is bound at residue H293. The segment at 403–850 is EPSP synthase; that stretch reads VIPGVPRHHP…WDDLENKIGL (448 aa). The For EPSP synthase activity role is filled by C832. The shikimate kinase stretch occupies residues 875–1070; the sequence is AASIILIGMR…TSGRRSYFLC (196 aa). ATP is bound at residue 882–889; sequence GMRGTGKT. Residues 1071 to 1296 are 3-dehydroquinase; that stretch reads LTYPDVTQSF…AAPGQLSFKQ (226 aa). The Proton acceptor; for 3-dehydroquinate dehydratase activity role is filled by H1198. Residue K1226 is the Schiff-base intermediate with substrate; for 3-dehydroquinate dehydratase activity of the active site. Residues 1309–1606 form a shikimate dehydrogenase region; that stretch reads AQRFYLFGTP…QFVFEEECES (298 aa).

The protein in the N-terminal section; belongs to the sugar phosphate cyclases superfamily. Dehydroquinate synthase family. This sequence in the 2nd section; belongs to the EPSP synthase family. It in the 3rd section; belongs to the shikimate kinase family. In the 4th section; belongs to the type-I 3-dehydroquinase family. The protein in the C-terminal section; belongs to the shikimate dehydrogenase family. As to quaternary structure, homodimer. Zn(2+) is required as a cofactor.

The protein resides in the cytoplasm. The catalysed reaction is 7-phospho-2-dehydro-3-deoxy-D-arabino-heptonate = 3-dehydroquinate + phosphate. It catalyses the reaction 3-dehydroquinate = 3-dehydroshikimate + H2O. The enzyme catalyses shikimate + NADP(+) = 3-dehydroshikimate + NADPH + H(+). It carries out the reaction shikimate + ATP = 3-phosphoshikimate + ADP + H(+). The catalysed reaction is 3-phosphoshikimate + phosphoenolpyruvate = 5-O-(1-carboxyvinyl)-3-phosphoshikimate + phosphate. Its pathway is metabolic intermediate biosynthesis; chorismate biosynthesis; chorismate from D-erythrose 4-phosphate and phosphoenolpyruvate: step 2/7. It functions in the pathway metabolic intermediate biosynthesis; chorismate biosynthesis; chorismate from D-erythrose 4-phosphate and phosphoenolpyruvate: step 3/7. It participates in metabolic intermediate biosynthesis; chorismate biosynthesis; chorismate from D-erythrose 4-phosphate and phosphoenolpyruvate: step 4/7. The protein operates within metabolic intermediate biosynthesis; chorismate biosynthesis; chorismate from D-erythrose 4-phosphate and phosphoenolpyruvate: step 5/7. Its pathway is metabolic intermediate biosynthesis; chorismate biosynthesis; chorismate from D-erythrose 4-phosphate and phosphoenolpyruvate: step 6/7. In terms of biological role, the AROM polypeptide catalyzes 5 consecutive enzymatic reactions in prechorismate polyaromatic amino acid biosynthesis. The protein is Pentafunctional AROM polypeptide of Laccaria bicolor (strain S238N-H82 / ATCC MYA-4686) (Bicoloured deceiver).